Consider the following 743-residue polypeptide: Ovocleidin-116 (743 aa).

The N-terminal stretch at 1-18 (MRATLFCLCLCLLGTVLP) is a signal peptide. The cysteines at positions 31 and 42 are disulfide-linked. A glycan (N-linked (GlcNAc...) asparagine) is linked at N62. The disordered stretch occupies residues 68–225 (KEEGDHQGTI…GTMGTGDSAI (158 aa)). The segment covering 129–141 (DSNSVYPTSTSVE) has biased composition (polar residues). The segment covering 169 to 179 (GPHGDGDGGNG) has biased composition (gly residues). N293 is a glycosylation site (N-linked (GlcNAc...) asparagine; partial). 6 disordered regions span residues 333-356 (GDSVTSRPVGHPSVGNSGDGATEI), 385-454 (SGKG…GPER), 505-534 (ARTQPEVASAPSTVGKAAPERHRNRAQQEV), 549-577 (RHRARVRPESARLGQAARPEVAPAPSTGG), 628-649 (DPWVWGSAHPQAQHTRGSTVAG), and 692-743 (SGVG…RQSL). Residues 402–420 (ATMTTRGGRGTASSGLTTG) show a composition bias toward low complexity. Polar residues predominate over residues 421 to 431 (DCSTAASTPSR). A compositionally biased stretch (basic and acidic residues) spans 549-558 (RHRARVRPES).

It belongs to the osteoregulin family. Post-translationally, asn-62 is fully glycosylated, whereas only less than 10% of Asn-293 seem to be glycosylated. In terms of tissue distribution, in the eggshell, expressed mainly in the palisade and mammillary layers. Expression also detected in the hypertrophic zone of the epiphyseal growth plate, and in cortical and medullary bone (at protein level). Highly expressed in uterus. Not detected in the proximal oviduct, liver, magnum, duodenum and kidney.

The protein resides in the secreted. It localises to the extracellular space. It is found in the extracellular matrix. Functionally, major component of the eggshell matrix. May play an important role in the regulation of calcite growth during eggshell calcification. May also regulate the mineralization process in developing and growing bones. The polypeptide is Ovocleidin-116 (Gallus gallus (Chicken)).